Consider the following 366-residue polypeptide: MHNTFTHTKNNTHTKNNTQAKNSGSQTKSNAVSLNKPRKLTEADVTPESIFYQRRKVLQALGITAATLALPASAQADLLAWFKGNEPPKAPSGKPLTFTPSAAYHPDLALTPEDKVTGYNNFYEFGLDKADPAANAGTLKTEDWQIKIDGDVVKPMTLDMDYLMKCFPLEERIYRLRCVEAWSMVVPWIGFELGKLLKLAEPTSNARYVAFQTLYAPDQMPGQKNRFIGGGLDYPYVEGLRLDEAMHPLAFMVVGVYGKTLPPQNGAPLRLMTPWKYGFKSIKSIVHIRLTRDQPPTTWNLSAPNEYGFYANVNPHVDHPRWSQATERVIGSGGILDVKRQPTLLFNGYAEQVASLYRGLDLRKNF.

Over residues 1-22 the composition is skewed to low complexity; sequence MHNTFTHTKNNTHTKNNTQAKN. Residues 1–40 are disordered; that stretch reads MHNTFTHTKNNTHTKNNTQAKNSGSQTKSNAVSLNKPRKL. A signal peptide (tat-type signal) is located at residues 1 to 76; the sequence is MHNTFTHTKN…TLALPASAQA (76 aa). Residues 23 to 33 are compositionally biased toward polar residues; it reads SGSQTKSNAVS. Residues asparagine 120, 123-124, cysteine 178, threonine 213, asparagine 265, arginine 270, and 281-283 each bind Mo-molybdopterin; these read YE and SIK.

It belongs to the MsrP family. As to quaternary structure, heterodimer of a catalytic subunit (MsrP) and a heme-binding subunit (MsrQ). It depends on Mo-molybdopterin as a cofactor. Predicted to be exported by the Tat system. The position of the signal peptide cleavage has not been experimentally proven.

The protein localises to the periplasm. The enzyme catalyses L-methionyl-[protein] + a quinone + H2O = L-methionyl-(S)-S-oxide-[protein] + a quinol. The catalysed reaction is L-methionyl-[protein] + a quinone + H2O = L-methionyl-(R)-S-oxide-[protein] + a quinol. Functionally, part of the MsrPQ system that repairs oxidized periplasmic proteins containing methionine sulfoxide residues (Met-O), using respiratory chain electrons. Thus protects these proteins from oxidative-stress damage caused by reactive species of oxygen and chlorine generated by the host defense mechanisms. MsrPQ is essential for the maintenance of envelope integrity under bleach stress, rescuing a wide series of structurally unrelated periplasmic proteins from methionine oxidation. The catalytic subunit MsrP is non-stereospecific, being able to reduce both (R-) and (S-) diastereoisomers of methionine sulfoxide. This chain is Protein-methionine-sulfoxide reductase catalytic subunit MsrP, found in Yersinia pestis.